The following is a 155-amino-acid chain: Endoribonuclease YbeY (155 aa).

Positions 113, 117, and 123 each coordinate Zn(2+).

The protein belongs to the endoribonuclease YbeY family. It depends on Zn(2+) as a cofactor.

It is found in the cytoplasm. Single strand-specific metallo-endoribonuclease involved in late-stage 70S ribosome quality control and in maturation of the 3' terminus of the 16S rRNA. The chain is Endoribonuclease YbeY from Ureaplasma parvum serovar 3 (strain ATCC 27815 / 27 / NCTC 11736).